The sequence spans 118 residues: MATATSKAKPSDRIKMRIRKGDTVQVIAGKDKGKTGEVLRTLPNENRLIVEGVNMRTRHEKPTQEGETGRIVNEEASLHASNVMLYSTAKKVASRVEIVVEKDGSKKRKLKKTGEVLD.

Belongs to the universal ribosomal protein uL24 family. Part of the 50S ribosomal subunit.

In terms of biological role, one of two assembly initiator proteins, it binds directly to the 5'-end of the 23S rRNA, where it nucleates assembly of the 50S subunit. Its function is as follows. One of the proteins that surrounds the polypeptide exit tunnel on the outside of the subunit. The protein is Large ribosomal subunit protein uL24 of Parasynechococcus marenigrum (strain WH8102).